The primary structure comprises 218 residues: Glutathione S-transferase Mu 1 (218 aa).

The 87-residue stretch at 2-88 (PMILGYWDIR…YIARKHNLCG (87 aa)) folds into the GST N-terminal domain. 7–8 (YW) is a glutathione binding site. Residue threonine 34 is modified to Phosphothreonine. Glutathione-binding positions include 43 to 46 (RSQW), lysine 50, 59 to 60 (NL), and 72 to 73 (QS). The GST C-terminal domain occupies 90-208 (TEEEKIRVDI…KSSRFLPRPV (119 aa)). Tyrosine 116 contributes to the substrate binding site. Residue serine 210 is modified to Phosphoserine.

The protein belongs to the GST superfamily. Mu family. As to quaternary structure, homodimer. As to expression, liver (at protein level).

It localises to the cytoplasm. It catalyses the reaction RX + glutathione = an S-substituted glutathione + a halide anion + H(+). It carries out the reaction prostaglandin A2 + glutathione = prostaglandin A2-S-(R)-glutathione. The catalysed reaction is prostaglandin J2 + glutathione = prostaglandin J2-S-(R)-glutathione. The enzyme catalyses prostaglandin J2 + glutathione = prostaglandin J2-S-(S)-glutathione. It catalyses the reaction prostaglandin A2 + glutathione = prostaglandin A2-S-(S)-glutathione. It carries out the reaction 11(S)-hydroxy-14(S),15(S)-epoxy-(5Z,8Z,12E)-eicosatrienoate + glutathione = (11S,15S)-dihydroxy-14(R)-S-glutathionyl-(5Z,8Z,12E)-eicosatrienoate. Its function is as follows. Conjugation of reduced glutathione to a wide number of exogenous and endogenous hydrophobic electrophiles. Involved in the formation of glutathione conjugates of both prostaglandin A2 (PGA2) and prostaglandin J2 (PGJ2). Participates in the formation of novel hepoxilin regioisomers. This chain is Glutathione S-transferase Mu 1, found in Homo sapiens (Human).